Consider the following 435-residue polypeptide: Tol-Pal system protein TolB (435 aa).

Positions 1–20 are cleaved as a signal peptide; sequence MRKIIAGVFIFVFLISNLYA.

Belongs to the TolB family. The Tol-Pal system is composed of five core proteins: the inner membrane proteins TolA, TolQ and TolR, the periplasmic protein TolB and the outer membrane protein Pal. They form a network linking the inner and outer membranes and the peptidoglycan layer.

The protein localises to the periplasm. Functionally, part of the Tol-Pal system, which plays a role in outer membrane invagination during cell division and is important for maintaining outer membrane integrity. The polypeptide is Tol-Pal system protein TolB (Francisella tularensis subsp. holarctica (strain LVS)).